The following is a 296-amino-acid chain: Outer surface protein B (296 aa).

An N-terminal signal peptide occupies residues 1–15 (MRLLIGFALALALIG). Cysteine 16 is lipidated: N-palmitoyl cysteine. Cysteine 16 is lipidated: S-diacylglycerol cysteine. The segment at 25–51 (GSQKENDLNLEDSSKKSHQNAKQDLPA) is disordered. Residues 28-39 (KENDLNLEDSSK) show a composition bias toward basic and acidic residues.

Its subcellular location is the cell outer membrane. The polypeptide is Outer surface protein B (ospB) (Borreliella burgdorferi (strain ATCC 35210 / DSM 4680 / CIP 102532 / B31) (Borrelia burgdorferi)).